The chain runs to 118 residues: Large ribosomal subunit protein uL18 (118 aa).

The interval 1-25 (MISKPDKNKLRQKRHRRVRGKLSGT) is disordered. The span at 10-20 (LRQKRHRRVRG) shows a compositional bias: basic residues.

The protein belongs to the universal ribosomal protein uL18 family. Part of the 50S ribosomal subunit; part of the 5S rRNA/L5/L18/L25 subcomplex. Contacts the 5S and 23S rRNAs.

This is one of the proteins that bind and probably mediate the attachment of the 5S RNA into the large ribosomal subunit, where it forms part of the central protuberance. In Streptococcus pneumoniae (strain Hungary19A-6), this protein is Large ribosomal subunit protein uL18.